The following is a 189-amino-acid chain: Peptidyl-tRNA hydrolase (189 aa).

Tyrosine 15 is a binding site for tRNA. The Proton acceptor role is filled by histidine 20. TRNA contacts are provided by phenylalanine 66, asparagine 68, and asparagine 114.

This sequence belongs to the PTH family. In terms of assembly, monomer.

The protein resides in the cytoplasm. The catalysed reaction is an N-acyl-L-alpha-aminoacyl-tRNA + H2O = an N-acyl-L-amino acid + a tRNA + H(+). In terms of biological role, hydrolyzes ribosome-free peptidyl-tRNAs (with 1 or more amino acids incorporated), which drop off the ribosome during protein synthesis, or as a result of ribosome stalling. Catalyzes the release of premature peptidyl moieties from peptidyl-tRNA molecules trapped in stalled 50S ribosomal subunits, and thus maintains levels of free tRNAs and 50S ribosomes. This Streptococcus pyogenes serotype M3 (strain ATCC BAA-595 / MGAS315) protein is Peptidyl-tRNA hydrolase.